Consider the following 518-residue polypeptide: Cytochrome P450 1A1 (518 aa).

The segment at 33 to 44 (SKPRVPKGLKRL) is mitochondrial targeting signal. The O-linked (GlcNAc) serine glycan is linked to Ser71. Phe228 is a binding site for substrate. Cys461 serves as a coordination point for heme.

This sequence belongs to the cytochrome P450 family. In terms of assembly, interacts with cytosolic chaperones HSP70 and HSP90; this interaction is required for initial targeting to mitochondria. Interacts (via mitochondrial targeting signal) with TOMM40 (via N-terminus); this interaction is required for translocation across the mitochondrial outer membrane. Requires heme as cofactor.

Its subcellular location is the endoplasmic reticulum membrane. The protein localises to the mitochondrion inner membrane. The protein resides in the microsome membrane. It is found in the cytoplasm. The enzyme catalyses an organic molecule + reduced [NADPH--hemoprotein reductase] + O2 = an alcohol + oxidized [NADPH--hemoprotein reductase] + H2O + H(+). It carries out the reaction estrone + reduced [NADPH--hemoprotein reductase] + O2 = 2-hydroxyestrone + oxidized [NADPH--hemoprotein reductase] + H2O + H(+). It catalyses the reaction estrone + reduced [NADPH--hemoprotein reductase] + O2 = 4-hydroxyestrone + oxidized [NADPH--hemoprotein reductase] + H2O + H(+). The catalysed reaction is estrone + reduced [NADPH--hemoprotein reductase] + O2 = 6alpha-hydroxyestrone + oxidized [NADPH--hemoprotein reductase] + H2O + H(+). The enzyme catalyses estrone + reduced [NADPH--hemoprotein reductase] + O2 = 15alpha-hydroxyestrone + oxidized [NADPH--hemoprotein reductase] + H2O + H(+). It carries out the reaction estrone + reduced [NADPH--hemoprotein reductase] + O2 = 16alpha-hydroxyestrone + oxidized [NADPH--hemoprotein reductase] + H2O + H(+). It catalyses the reaction 17beta-estradiol + reduced [NADPH--hemoprotein reductase] + O2 = 2-hydroxy-17beta-estradiol + oxidized [NADPH--hemoprotein reductase] + H2O + H(+). The catalysed reaction is 17beta-estradiol + reduced [NADPH--hemoprotein reductase] + O2 = 4-hydroxy-17beta-estradiol + oxidized [NADPH--hemoprotein reductase] + H2O + H(+). The enzyme catalyses 17beta-estradiol + reduced [NADPH--hemoprotein reductase] + O2 = 6alpha-hydroxy-17beta-estradiol + oxidized [NADPH--hemoprotein reductase] + H2O + H(+). It carries out the reaction 17beta-estradiol + reduced [NADPH--hemoprotein reductase] + O2 = 7alpha-hydroxy-17beta-estradiol + oxidized [NADPH--hemoprotein reductase] + H2O + H(+). It catalyses the reaction 17beta-estradiol + reduced [NADPH--hemoprotein reductase] + O2 = 15alpha-hydroxy-17beta-estradiol + oxidized [NADPH--hemoprotein reductase] + H2O + H(+). The catalysed reaction is (5Z,8Z,11Z)-eicosatrienoate + reduced [NADPH--hemoprotein reductase] + O2 = 19-hydroxy-(5Z,8Z,11Z)-eicosatrienoate + oxidized [NADPH--hemoprotein reductase] + H2O + H(+). The enzyme catalyses (5Z,8Z,11Z,14Z)-eicosatetraenoate + reduced [NADPH--hemoprotein reductase] + O2 = 16-hydroxy-(5Z,8Z,11Z,14Z)-eicosatetraenoate + oxidized [NADPH--hemoprotein reductase] + H2O + H(+). It carries out the reaction (5Z,8Z,11Z,14Z)-eicosatetraenoate + reduced [NADPH--hemoprotein reductase] + O2 = 17-hydroxy-(5Z,8Z,11Z,14Z)-eicosatetraenoate + oxidized [NADPH--hemoprotein reductase] + H2O + H(+). It catalyses the reaction (5Z,8Z,11Z,14Z)-eicosatetraenoate + reduced [NADPH--hemoprotein reductase] + O2 = 18-hydroxy-(5Z,8Z,11Z,14Z)-eicosatetraenoate + oxidized [NADPH--hemoprotein reductase] + H2O + H(+). The catalysed reaction is (5Z,8Z,11Z,14Z)-eicosatetraenoate + reduced [NADPH--hemoprotein reductase] + O2 = 19-hydroxy-(5Z,8Z,11Z,14Z)-eicosatetraenoate + oxidized [NADPH--hemoprotein reductase] + H2O + H(+). The enzyme catalyses (5Z,8Z,11Z,14Z,17Z)-eicosapentaenoate + reduced [NADPH--hemoprotein reductase] + O2 = 19-hydroxy-(5Z,8Z,11Z,14Z,17Z)-eicosapentaenoate + oxidized [NADPH--hemoprotein reductase] + H2O + H(+). It carries out the reaction (5Z,8Z,11Z,14Z)-eicosatetraenoate + reduced [NADPH--hemoprotein reductase] + O2 = (8R,9S)-epoxy-(5Z,11Z,14Z)-eicosatrienoate + oxidized [NADPH--hemoprotein reductase] + H2O + H(+). It catalyses the reaction (5Z,8Z,11Z,14Z)-eicosatetraenoate + reduced [NADPH--hemoprotein reductase] + O2 = (11R,12S)-epoxy-(5Z,8Z,14Z)-eicosatrienoate + oxidized [NADPH--hemoprotein reductase] + H2O + H(+). The catalysed reaction is (5Z,8Z,11Z,14Z)-eicosatetraenoate + reduced [NADPH--hemoprotein reductase] + O2 = (14S,15R)-epoxy-(5Z,8Z,11Z)-eicosatrienoate + oxidized [NADPH--hemoprotein reductase] + H2O + H(+). The enzyme catalyses (5Z,8Z,11Z,14Z)-eicosatetraenoate + reduced [NADPH--hemoprotein reductase] + O2 = (14R,15S)-epoxy-(5Z,8Z,11Z)-eicosatrienoate + oxidized [NADPH--hemoprotein reductase] + H2O + H(+). It carries out the reaction (5Z,8Z,11Z,14Z,17Z)-eicosapentaenoate + reduced [NADPH--hemoprotein reductase] + O2 = (17R,18S)-epoxy-(5Z,8Z,11Z,14Z)-eicosatetraenoate + oxidized [NADPH--hemoprotein reductase] + H2O + H(+). It catalyses the reaction (4Z,7Z,10Z,13Z,16Z,19Z)-docosahexaenoate + reduced [NADPH--hemoprotein reductase] + O2 = (19S,20R)-epoxy-(4Z,7Z,10Z,13Z,16Z)-docosapentaenoate + oxidized [NADPH--hemoprotein reductase] + H2O + H(+). The catalysed reaction is (4Z,7Z,10Z,13Z,16Z,19Z)-docosahexaenoate + reduced [NADPH--hemoprotein reductase] + O2 = (19R,20S)-epoxy-(4Z,7Z,10Z,13Z,16Z)-docosapentaenoate + oxidized [NADPH--hemoprotein reductase] + H2O + H(+). The enzyme catalyses all-trans-retinol + reduced [NADPH--hemoprotein reductase] + O2 = all-trans-retinal + oxidized [NADPH--hemoprotein reductase] + 2 H2O + H(+). It carries out the reaction all-trans-retinal + reduced [NADPH--hemoprotein reductase] + O2 = all-trans-retinoate + oxidized [NADPH--hemoprotein reductase] + H2O + 2 H(+). It catalyses the reaction (13S)-hydroperoxy-(9Z,11E)-octadecadienoate = 13-oxo-(9Z,11E)-octadecadienoate + H2O. The catalysed reaction is (12S)-hydroperoxy-(5Z,8Z,10E,14Z)-eicosatetraenoate = 12-oxo-(5Z,8Z,10E,14Z)-eicosatetraenoate + H2O. The enzyme catalyses (15S)-hydroperoxy-(5Z,8Z,11Z,13E)-eicosatetraenoate = 15-oxo-(5Z,8Z,11Z,13E)-eicosatetraenoate + H2O. It carries out the reaction (5S)-hydroperoxy-(6E,8Z,11Z,14Z)-eicosatetraenoate = 5-oxo-(6E,8Z,11Z,14Z)-eicosatetraenoate + H2O. The protein operates within steroid hormone biosynthesis. It functions in the pathway lipid metabolism; fatty acid metabolism. It participates in cofactor metabolism; retinol metabolism. Its function is as follows. A cytochrome P450 monooxygenase involved in the metabolism of various endogenous substrates, including fatty acids, steroid hormones and vitamins. Mechanistically, uses molecular oxygen inserting one oxygen atom into a substrate, and reducing the second into a water molecule, with two electrons provided by NADPH via cytochrome P450 reductase (CPR; NADPH-ferrihemoprotein reductase). Catalyzes the hydroxylation of carbon-hydrogen bonds. Exhibits high catalytic activity for the formation of hydroxyestrogens from estrone (E1) and 17beta-estradiol (E2), namely 2-hydroxy E1 and E2, as well as D-ring hydroxylated E1 and E2 at the C15alpha and C16alpha positions. Displays different regioselectivities for polyunsaturated fatty acids (PUFA) hydroxylation. Catalyzes the epoxidation of double bonds of certain PUFA. Converts arachidonic acid toward epoxyeicosatrienoic acid (EET) regioisomers, 8,9-, 11,12-, and 14,15-EET, that function as lipid mediators in the vascular system. Displays an absolute stereoselectivity in the epoxidation of eicosapentaenoic acid (EPA) producing the 17(R),18(S) enantiomer. May play an important role in all-trans retinoic acid biosynthesis in extrahepatic tissues. Catalyzes two successive oxidative transformation of all-trans retinol to all-trans retinal and then to the active form all-trans retinoic acid. May also participate in eicosanoids metabolism by converting hydroperoxide species into oxo metabolites (lipoxygenase-like reaction, NADPH-independent). This chain is Cytochrome P450 1A1 (CYP1A1), found in Oryctolagus cuniculus (Rabbit).